The primary structure comprises 426 residues: DQTALYIRMLGDVRVRSRAGFETERRGSHPYIDFRIFHAQSEIEASVSARNIRRLLSFQRYLRSSRFFRGATVCRSLNILDEDYNGQAKCMLEKVGNWNFDIFLFDRLTNGNSLVSLTFHLFSLHGLIEYFHLDMVKLRRFLVMIQEDYHSQNPYHNAVHAADVTQAMHCYLKEPKLANSVTPWDILLSLIAAATHDLDHPGVNQPFLIKTNHYLATLYKNTSVLENHHWRSAVGLLRESGLFSHLPLESRHEMEAQIGALILATDISRQNEYLSLFRSHLDKGDLHLDDGRHRHLVLQMALKCADICNPCRNWELSKQWSEKVTEEFFHQGDIEKKYHLGVSPLCDRQTESIANIQIGFMTYLQEPLFTEWARFSDTRLSQTMLGHVGLNKASWKGLQRQQPSSEDASAAFELNSQLLTQENRLS.

The PDEase domain occupies leucine 80–glutamine 402. The active-site Proton donor is histidine 156. Residues histidine 160, histidine 196, aspartate 197, and aspartate 306 each coordinate a divalent metal cation.

Belongs to the cyclic nucleotide phosphodiesterase family. PDE7 subfamily. Interacts with CBFA2T3. The cofactor is a divalent metal cation.

The protein resides in the cytoplasm. Its subcellular location is the cytosol. The catalysed reaction is 3',5'-cyclic AMP + H2O = AMP + H(+). The protein operates within purine metabolism; 3',5'-cyclic AMP degradation; AMP from 3',5'-cyclic AMP: step 1/1. Its function is as follows. Hydrolyzes the second messenger cAMP, which is a key regulator of many important physiological processes. May have a role in muscle signal transduction. The protein is High affinity 3',5'-cyclic-AMP phosphodiesterase 7A (Pde7a) of Rattus norvegicus (Rat).